The sequence spans 511 residues: Probable eukaryotic translation initiation factor 4H (511 aa).

Disordered regions lie at residues 25–63 (SWAD…DRGS) and 154–511 (TIRV…EVKI). Positions 39–51 (AREESGSGLKRGD) are enriched in basic and acidic residues. One can recognise an RRM domain in the interval 86-162 (FTAFIGNLSF…RTIRVNVAEA (77 aa)). Polar residues predominate over residues 179-196 (WRRSTPLASRESSSQPSR). 2 stretches are compositionally biased toward basic and acidic residues: residues 230–247 (VRRD…RDPG) and 261–270 (LAEKVDRDVP). Positions 285–318 (LADTEQTWSRGTKLRTPTTTSRQSSADSTPSSGA) are enriched in polar residues. Low complexity predominate over residues 331–349 (TAGSPSATANATPAAPASG). S334 is modified (phosphoserine). Basic and acidic residues-rich tracts occupy residues 360-388 (AARE…EKQK) and 394-419 (KPVE…DKVA). Low complexity predominate over residues 420–434 (GKPTTAPATTTNTGA). The span at 438–448 (GSADRAKKDEQ) shows a compositional bias: basic and acidic residues. Residues 451–467 (EQVQPSRKSSQTGATSE) show a composition bias toward polar residues. A compositionally biased stretch (basic and acidic residues) spans 502 to 511 (VTKGVEEVKI).

The protein resides in the cytoplasm. It is found in the P-body. Its function is as follows. Probable translation initiation factor. This Cryptococcus neoformans var. grubii serotype A (strain H99 / ATCC 208821 / CBS 10515 / FGSC 9487) (Filobasidiella neoformans var. grubii) protein is Probable eukaryotic translation initiation factor 4H.